A 216-amino-acid chain; its full sequence is ATP synthase subunit a (216 aa).

Helical transmembrane passes span 1–21, 62–82, 88–108, 119–139, 149–169, 174–194, and 196–216; these read MEYS…IFVL, LIAA…VPGF, NINT…FEGF, FMGP…ISHI, LFAN…LVIK, LVVS…AIFI, and TYIF…HEEH.

It belongs to the ATPase A chain family. As to quaternary structure, F-type ATPases have 2 components, CF(1) - the catalytic core - and CF(0) - the membrane proton channel. CF(1) has five subunits: alpha(3), beta(3), gamma(1), delta(1), epsilon(1). CF(0) has three main subunits: a(1), b(2) and c(9-12). The alpha and beta chains form an alternating ring which encloses part of the gamma chain. CF(1) is attached to CF(0) by a central stalk formed by the gamma and epsilon chains, while a peripheral stalk is formed by the delta and b chains.

It is found in the cell inner membrane. Key component of the proton channel; it plays a direct role in the translocation of protons across the membrane. The sequence is that of ATP synthase subunit a from Aquifex aeolicus (strain VF5).